Consider the following 120-residue polypeptide: uncharacterized protein (120 aa).

The segment at 90–120 (SLASRGGHMTQSGQCHVSGSLLGRGHKSRGR) is disordered.

This is an uncharacterized protein from Homo sapiens (Human).